Consider the following 115-residue polypeptide: Holo-[acyl-carrier-protein] synthase (115 aa).

Mg(2+) is bound by residues aspartate 6 and glutamate 51.

Belongs to the P-Pant transferase superfamily. AcpS family. It depends on Mg(2+) as a cofactor.

Its subcellular location is the cytoplasm. It carries out the reaction apo-[ACP] + CoA = holo-[ACP] + adenosine 3',5'-bisphosphate + H(+). Its function is as follows. Transfers the 4'-phosphopantetheine moiety from coenzyme A to a Ser of acyl-carrier-protein. The chain is Holo-[acyl-carrier-protein] synthase from Campylobacter jejuni subsp. jejuni serotype O:23/36 (strain 81-176).